A 327-amino-acid polypeptide reads, in one-letter code: Porphobilinogen deaminase (327 aa).

An S-(dipyrrolylmethanemethyl)cysteine modification is found at cysteine 250.

Belongs to the HMBS family. In terms of assembly, monomer. Requires dipyrromethane as cofactor.

It catalyses the reaction 4 porphobilinogen + H2O = hydroxymethylbilane + 4 NH4(+). It functions in the pathway porphyrin-containing compound metabolism; protoporphyrin-IX biosynthesis; coproporphyrinogen-III from 5-aminolevulinate: step 2/4. Its function is as follows. Tetrapolymerization of the monopyrrole PBG into the hydroxymethylbilane pre-uroporphyrinogen in several discrete steps. This chain is Porphobilinogen deaminase, found in Paraburkholderia phymatum (strain DSM 17167 / CIP 108236 / LMG 21445 / STM815) (Burkholderia phymatum).